Reading from the N-terminus, the 301-residue chain is uncharacterized protein (301 aa).

9 helical membrane passes run 1-21, 33-53, 72-92, 101-121, 124-144, 185-205, 220-240, 246-266, and 270-290; these read MSWI…LGIV, SVLF…YFYY, AMSL…KIPG, FGII…TILI, FAWL…KTFY, YFTP…VFAI, IIYT…FCLA, FSYI…KIFI, and IAIP…FGII.

It belongs to the TerC family.

The protein localises to the cell membrane. This is an uncharacterized protein from Rickettsia felis (strain ATCC VR-1525 / URRWXCal2) (Rickettsia azadi).